We begin with the raw amino-acid sequence, 167 residues long: MICCDKVLSSVQSMPVIDKCSVTKCLQTAKQAAVLALSLFAVFASGSLSILSAAVLFSGTAAVLPYLLILTTALLGFVCAVIVLLRNLSAVVQSCKKRSPEEIEGAARPSDQQESGGRLSEESASPQASPTSSTFGLESALRSIGDSVSGAFDDINKDNSRSRSHSF.

A run of 2 helical transmembrane segments spans residues 37 to 57 (LSLFAVFASGSLSILSAAVLF) and 63 to 83 (VLPYLLILTTALLGFVCAVIV). 2 disordered regions span residues 97–136 (KRSPEEIEGAARPSDQQESGGRLSEESASPQASPTSSTFG) and 148–167 (VSGAFDDINKDNSRSRSHSF). Residues 122 to 134 (ESASPQASPTSST) show a composition bias toward low complexity. A Phosphorylation-dependent binding motif motif is present at residues 161–166 (RSRSHS). Phosphoserine is present on serine 166.

Phosphorylated by chlamydial kinase Pnk1.

Its subcellular location is the secreted. The protein resides in the host vacuole. It is found in the host pathogen-containing vacuole. It localises to the host pathogen-containing vacuole membrane. Functionally, inclusion membrane protein probably involved in early modification events of the chlamydial inclusion. Binds to the host cell 14-3-3 beta (YWHAB); phosphorylation of Ser-166 is probably required. The polypeptide is Inclusion membrane protein G (incG) (Chlamydia trachomatis serovar D (strain ATCC VR-885 / DSM 19411 / UW-3/Cx)).